The chain runs to 178 residues: Nascent polypeptide-associated complex subunit alpha (178 aa).

One can recognise an NAC-A/B domain in the interval 16-80 (PKNEKKAREL…AKVDDMNQRI (65 aa)). Low complexity predominate over residues 82 to 100 (EAQAQQAQQEALQKAAADA). The disordered stretch occupies residues 82–145 (EAQAQQAQQE…DETGLDPKDI (64 aa)). The segment covering 101–126 (GKTEDKSPEAITADLEKASLGDKKAE) has biased composition (basic and acidic residues). Residues 127 to 139 (DEEEDEGEIDETG) are compositionally biased toward acidic residues. In terms of domain architecture, UBA spans 140-178 (LDPKDIEIVVEQTQVSRAKAVKALRNHDGDMVNAIMDLS).

It belongs to the NAC-alpha family. In terms of assembly, part of the nascent polypeptide-associated complex (NAC), consisting of EGD2 and EGD1. NAC associates with ribosomes via EGD1.

Its subcellular location is the cytoplasm. It is found in the nucleus. Its function is as follows. Component of the nascent polypeptide-associated complex (NAC), a dynamic component of the ribosomal exit tunnel, protecting the emerging polypeptides from interaction with other cytoplasmic proteins to ensure appropriate nascent protein targeting. The NAC complex also promotes mitochondrial protein import by enhancing productive ribosome interactions with the outer mitochondrial membrane and blocks the inappropriate interaction of ribosomes translating non-secretory nascent polypeptides with translocation sites in the membrane of the endoplasmic reticulum. EGD2 may also be involved in transcription regulation. This is Nascent polypeptide-associated complex subunit alpha (EGD2) from Candida albicans (strain SC5314 / ATCC MYA-2876) (Yeast).